Reading from the N-terminus, the 439-residue chain is Tol-Pal system protein TolB (439 aa).

An N-terminal signal peptide occupies residues 1–22 (MKKPLRWLAALTALLLPLSALA).

The protein belongs to the TolB family. The Tol-Pal system is composed of five core proteins: the inner membrane proteins TolA, TolQ and TolR, the periplasmic protein TolB and the outer membrane protein Pal. They form a network linking the inner and outer membranes and the peptidoglycan layer.

It localises to the periplasm. In terms of biological role, part of the Tol-Pal system, which plays a role in outer membrane invagination during cell division and is important for maintaining outer membrane integrity. The chain is Tol-Pal system protein TolB from Xanthomonas axonopodis pv. citri (strain 306).